We begin with the raw amino-acid sequence, 193 residues long: Secreted RxLR effector protein 126 (193 aa).

An N-terminal signal peptide occupies residues 1-20 (MRYLLAVLIAAAFVISSGTS). The short motif at 50–64 (RMLQTKAVNGLEEER) is the RxLR-dEER element.

This sequence belongs to the RxLR effector family.

The protein localises to the secreted. It localises to the host membrane. In terms of biological role, secreted effector that completely suppresses the host cell death induced by cell death-inducing proteins. The chain is Secreted RxLR effector protein 126 from Plasmopara viticola (Downy mildew of grapevine).